Here is a 237-residue protein sequence, read N- to C-terminus: Ribosomal RNA small subunit methyltransferase G (237 aa).

S-adenosyl-L-methionine is bound by residues Gly78, Phe83, 129–130, and Arg148; that span reads AE. The segment at 218-237 is disordered; sequence KKETPNKYPRKAGMPNKRPL.

The protein belongs to the methyltransferase superfamily. RNA methyltransferase RsmG family.

The protein resides in the cytoplasm. In terms of biological role, specifically methylates the N7 position of a guanine in 16S rRNA. The sequence is that of Ribosomal RNA small subunit methyltransferase G from Streptococcus gordonii (strain Challis / ATCC 35105 / BCRC 15272 / CH1 / DL1 / V288).